Consider the following 91-residue polypeptide: Defensin-like protein 82 (91 aa).

The N-terminal stretch at 1-27 (MAIKKFSSLLLPLLMVLALVVLPIISG) is a signal peptide. Intrachain disulfides connect cysteine 34-cysteine 72, cysteine 41-cysteine 62, cysteine 47-cysteine 70, and cysteine 51-cysteine 71.

The protein belongs to the DEFL family.

It is found in the secreted. This is Defensin-like protein 82 from Arabidopsis thaliana (Mouse-ear cress).